The primary structure comprises 418 residues: Maltoporin (418 aa).

The N-terminal stretch at 1–26 (MLPMNRNTLGLAVTIATVFVSSTVTA) is a signal peptide.

Belongs to the porin LamB (TC 1.B.3) family. In terms of assembly, homotrimer formed of three 18-stranded antiparallel beta-barrels, containing three independent channels.

It localises to the cell outer membrane. It catalyses the reaction beta-maltose(in) = beta-maltose(out). Its function is as follows. Involved in the transport of maltose and maltodextrins. The protein is Maltoporin of Photobacterium profundum (strain SS9).